Here is a 493-residue protein sequence, read N- to C-terminus: Trigger factor (493 aa).

The PPIase FKBP-type domain occupies 169–254 (GDRVTMDYLG…VKEVAAPAET (86 aa)). Residues 439-493 (ELLAEDEDGDDTKPAKKSAKKKAAKAEDASAEGEEAAPKKKAAAKKKAADEGDAE) are disordered.

This sequence belongs to the FKBP-type PPIase family. Tig subfamily.

It localises to the cytoplasm. The enzyme catalyses [protein]-peptidylproline (omega=180) = [protein]-peptidylproline (omega=0). Functionally, involved in protein export. Acts as a chaperone by maintaining the newly synthesized protein in an open conformation. Functions as a peptidyl-prolyl cis-trans isomerase. The polypeptide is Trigger factor (Allorhizobium ampelinum (strain ATCC BAA-846 / DSM 112012 / S4) (Agrobacterium vitis (strain S4))).